The following is a 155-amino-acid chain: Large ribosomal subunit protein eL24A (155 aa).

Ser7 is modified (phosphoserine). A disordered region spans residues 66–155; the sequence is EVAKKRSRKT…AFQKVAATSR (90 aa). A compositionally biased stretch (basic and acidic residues) spans 89-129; it reads LIKERRSLKPEVRKANREEKLKANKEKKKAEKAARKAEKAK. The span at 131 to 142 shows a compositional bias: polar residues; the sequence is AGTQSSKFSKQQ.

The protein belongs to the eukaryotic ribosomal protein eL24 family. As to quaternary structure, component of the large ribosomal subunit (LSU). Mature yeast ribosomes consist of a small (40S) and a large (60S) subunit. The 40S small subunit contains 1 molecule of ribosomal RNA (18S rRNA) and 33 different proteins (encoded by 57 genes). The large 60S subunit contains 3 rRNA molecules (25S, 5.8S and 5S rRNA) and 46 different proteins (encoded by 81 genes).

The protein localises to the cytoplasm. Component of the ribosome, a large ribonucleoprotein complex responsible for the synthesis of proteins in the cell. The small ribosomal subunit (SSU) binds messenger RNAs (mRNAs) and translates the encoded message by selecting cognate aminoacyl-transfer RNA (tRNA) molecules. The large subunit (LSU) contains the ribosomal catalytic site termed the peptidyl transferase center (PTC), which catalyzes the formation of peptide bonds, thereby polymerizing the amino acids delivered by tRNAs into a polypeptide chain. The nascent polypeptides leave the ribosome through a tunnel in the LSU and interact with protein factors that function in enzymatic processing, targeting, and the membrane insertion of nascent chains at the exit of the ribosomal tunnel. The sequence is that of Large ribosomal subunit protein eL24A from Saccharomyces cerevisiae (strain ATCC 204508 / S288c) (Baker's yeast).